Consider the following 257-residue polypeptide: Probable endonuclease LCL3 (257 aa).

Residues 17-34 (LIDGTIVSVLVTGSAITL) form a helical membrane-spanning segment. The region spanning 59-243 (KWLYGKVTSV…RAKKKGLWSQ (185 aa)) is the TNase-like domain. The active site involves Arg-134. Ca(2+) is bound at residue Asp-139. Residues Glu-142 and Arg-182 contribute to the active site.

The protein belongs to the LCL3 family.

The protein resides in the mitochondrion. It is found in the membrane. This is Probable endonuclease LCL3 (LCL3) from Candida glabrata (strain ATCC 2001 / BCRC 20586 / JCM 3761 / NBRC 0622 / NRRL Y-65 / CBS 138) (Yeast).